The sequence spans 328 residues: Gonadotropin-releasing hormone receptor (328 aa).

Over methionine 1–arginine 38 the chain is Extracellular. A glycan (N-linked (GlcNAc...) asparagine) is linked at asparagine 18. A helical transmembrane segment spans residues valine 39–lysine 59. The Cytoplasmic portion of the chain corresponds to leucine 60–threonine 84. Residues leucine 85–valine 105 traverse the membrane as a helical segment. Topologically, residues glutamine 106–lysine 115 are extracellular. Cysteine 114 and cysteine 196 are joined by a disulfide. The chain crosses the membrane as a helical span at residues isoleucine 116–serine 136. Residues leucine 137 to threonine 160 are Cytoplasmic-facing. Residues glycine 161 to isoleucine 181 form a helical membrane-spanning segment. Residues histidine 182–glutamine 208 are Extracellular-facing. A helical transmembrane segment spans residues alanine 209–isoleucine 229. The Cytoplasmic segment spans residues cysteine 230–alanine 271. Residues phenylalanine 272–phenylalanine 292 form a helical membrane-spanning segment. Topologically, residues aspartate 293 to histidine 306 are extracellular. A helical membrane pass occupies residues phenylalanine 307–serine 327. Position 328 (leucine 328) is a topological domain, cytoplasmic.

The protein belongs to the G-protein coupled receptor 1 family.

It localises to the cell membrane. Its function is as follows. Receptor for gonadotropin releasing hormone (GnRH) that mediates the action of GnRH to stimulate the secretion of the gonadotropic hormones luteinizing hormone (LH) and follicle-stimulating hormone (FSH). This receptor mediates its action by association with G-proteins that activate a phosphatidylinositol-calcium second messenger system. This Cavia porcellus (Guinea pig) protein is Gonadotropin-releasing hormone receptor (GNRHR).